The following is a 313-amino-acid chain: Putative stilbene synthase 2 (313 aa).

The active site involves cysteine 88. Residues leucine 191 and 229-231 (GGP) each bind substrate.

The protein belongs to the thiolase-like superfamily. Chalcone/stilbene synthases family. In terms of assembly, homodimer.

It localises to the cytoplasm. It catalyses the reaction 4-coumaroyl-CoA + 3 malonyl-CoA + 3 H(+) = trans-resveratrol + 4 CO2 + 4 CoA. It functions in the pathway phytoalexin biosynthesis; 3,4',5-trihydroxystilbene biosynthesis; 3,4',5-trihydroxystilbene from trans-4-coumarate: step 2/2. This chain is Putative stilbene synthase 2, found in Arachis hypogaea (Peanut).